The sequence spans 443 residues: Thymidine phosphorylase (443 aa).

Belongs to the thymidine/pyrimidine-nucleoside phosphorylase family. Homodimer.

It catalyses the reaction thymidine + phosphate = 2-deoxy-alpha-D-ribose 1-phosphate + thymine. Its pathway is pyrimidine metabolism; dTMP biosynthesis via salvage pathway; dTMP from thymine: step 1/2. Its function is as follows. The enzymes which catalyze the reversible phosphorolysis of pyrimidine nucleosides are involved in the degradation of these compounds and in their utilization as carbon and energy sources, or in the rescue of pyrimidine bases for nucleotide synthesis. This chain is Thymidine phosphorylase, found in Shewanella baltica (strain OS223).